The chain runs to 457 residues: Methylphosphonate synthase (457 aa).

Residues 23 to 74 (ILNDIKRRPEDAANELGVSIEEINSIISGKQKISPSLIEKAVNIWPVNERDF) enclose the HTH cro/C1-type 1 domain. A DNA-binding region (H-T-H motif) is located at residues 32–50 (EDAANELGVSIEEINSIIS). 2 residues coordinate Fe cation: His-148 and His-190. The HTH cro/C1-type 2 domain occupies 247-301 (LEYYFELSNLTKEKFAKRTNFSMETLADFFTKKKLPTFDELKIIAKALNVNSRDL). The H-T-H motif DNA-binding region spans 258 to 277 (KEKFAKRTNFSMETLADFFT).

Belongs to the non-heme iron-dependent dioxygenase family. Fe(2+) is required as a cofactor.

The enzyme catalyses 2-hydroxyethylphosphonate + O2 = methylphosphonate + hydrogencarbonate + H(+). Its pathway is phosphorus metabolism; phosphonate biosynthesis. Functionally, catalyzes the conversion of 2-hydroxyethylphosphonate into methylphosphonate in the methylphosphonate biosynthesis pathway. The polypeptide is Methylphosphonate synthase (mpnS) (Nitrosopumilus maritimus (strain SCM1)).